A 407-amino-acid polypeptide reads, in one-letter code: Argininosuccinate synthase (407 aa).

Residues 10 to 18 (AYSGGLDTS) and Ala37 contribute to the ATP site. The L-citrulline site is built by Tyr88 and Ser93. Gly118 is an ATP binding site. Positions 120, 124, and 125 each coordinate L-aspartate. Residue Asn124 coordinates L-citrulline. Residues Arg128, Ser179, Ser188, Glu264, and Tyr276 each contribute to the L-citrulline site.

This sequence belongs to the argininosuccinate synthase family. Type 1 subfamily. In terms of assembly, homotetramer.

It is found in the cytoplasm. It carries out the reaction L-citrulline + L-aspartate + ATP = 2-(N(omega)-L-arginino)succinate + AMP + diphosphate + H(+). The protein operates within amino-acid biosynthesis; L-arginine biosynthesis; L-arginine from L-ornithine and carbamoyl phosphate: step 2/3. In Jannaschia sp. (strain CCS1), this protein is Argininosuccinate synthase.